A 138-amino-acid chain; its full sequence is Large ribosomal subunit protein uL16 (138 aa).

A compositionally biased stretch (basic residues) spans 1 to 14 (MLQPKRTKYRRTHR). The tract at residues 1-24 (MLQPKRTKYRRTHRLQHDKGEAHT) is disordered. Over residues 15–24 (LQHDKGEAHT) the composition is skewed to basic and acidic residues.

It belongs to the universal ribosomal protein uL16 family. In terms of assembly, part of the 50S ribosomal subunit.

Functionally, binds 23S rRNA and is also seen to make contacts with the A and possibly P site tRNAs. The chain is Large ribosomal subunit protein uL16 from Mycoplasma mobile (strain ATCC 43663 / 163K / NCTC 11711) (Mesomycoplasma mobile).